Reading from the N-terminus, the 711-residue chain is Early transcription factor 82 kDa subunit (711 aa).

It belongs to the poxviridae VETF large subunit family. Heterodimer of a 70 kDa and a 82 kDa subunit. Part of the early transcription complex composed of ETF, RAP94, and the DNA-directed RNA polymerase.

Functionally, acts with RNA polymerase to initiate transcription from early gene promoters. Is recruited by the RPO-associated protein of 94 kDa (RAP94) to form the early transcription complex, which also contains the core RNA polymerase. ETF heterodimer binds to early gene promoters. The chain is Early transcription factor 82 kDa subunit (VETFL) from Oryctolagus cuniculus (Rabbit).